The chain runs to 513 residues: Dye-decolorizing peroxidase msp1 (513 aa).

Positions 1–20 (MKLFSASVFAAIIASHYASA) are cleaved as a signal peptide. The propeptide occupies 21-55 (TAHIRAPNVKPRRTNSLLTAPPQQPPLPSAQQAAS). The segment at 33–52 (RTNSLLTAPPQQPPLPSAQQ) is disordered. D228 acts as the Proton acceptor in catalysis. H365 is a heme binding site.

Homodimer. Requires heme b as cofactor.

Its subcellular location is the secreted. It carries out the reaction Reactive Blue 5 + 2 H2O2 = 2,2'-disulfonyl azobenzene + 3-[(4-amino-6-chloro-1,3,5-triazin-2-yl)amino]benzenesulfonate + phthalate + 2 H2O + 2 H(+). It catalyses the reaction 2 a phenolic donor + H2O2 = 2 a phenolic radical donor + 2 H2O. Its function is as follows. Manganese-independent peroxidase that is able to convert a large number of compounds, but its physiological substrate is not known. In addition to classic peroxidase substrates (e.g. 2,6-dimethoxyphenol), oxidizes dyes such as Reactive Blue 5. Also degrades beta-carotene. The polypeptide is Dye-decolorizing peroxidase msp1 (Mycetinis scorodonius (Garlic mushroom)).